The following is a 144-amino-acid chain: Superoxide dismutase [Mn], mitochondrial (144 aa).

Mn(2+) contacts are provided by His10, His58, and Asp143.

It belongs to the iron/manganese superoxide dismutase family. In terms of assembly, homotetramer. Mn(2+) serves as cofactor.

The protein resides in the mitochondrion matrix. It carries out the reaction 2 superoxide + 2 H(+) = H2O2 + O2. Destroys superoxide anion radicals which are normally produced within the cells and which are toxic to biological systems. The sequence is that of Superoxide dismutase [Mn], mitochondrial from Branchiostoma floridae (Florida lancelet).